Consider the following 227-residue polypeptide: MGHKVNPTGIRLGVIKEHNSVWYADKKDYAKNLLNDIQVREFLDKRLVKASVSKIVIERPAQNARITIHTARPGIVIGKKGEDVDRLRREVSDMMGVPVHINIEEVRKPDLDARLVAQNVAGQLERRVMFRRAMKRAVQNAMRQGAKGIKIQVGGRLGGAEIARSEWYREGRVPLHTLRADIDYATYEAHTTYGVIGVKVWIFKGEILGGMEQVRADKKASGKKGSK.

A KH type-2 domain is found at 39–107 (VREFLDKRLV…PVHINIEEVR (69 aa)).

This sequence belongs to the universal ribosomal protein uS3 family. As to quaternary structure, part of the 30S ribosomal subunit. Forms a tight complex with proteins S10 and S14.

Its function is as follows. Binds the lower part of the 30S subunit head. Binds mRNA in the 70S ribosome, positioning it for translation. The chain is Small ribosomal subunit protein uS3 from Marinobacter nauticus (strain ATCC 700491 / DSM 11845 / VT8) (Marinobacter aquaeolei).